Here is a 240-residue protein sequence, read N- to C-terminus: Ubiquinone biosynthesis O-methyltransferase (240 aa).

Residues R36, G60, D81, and L123 each coordinate S-adenosyl-L-methionine.

The protein belongs to the methyltransferase superfamily. UbiG/COQ3 family.

The catalysed reaction is a 3-demethylubiquinol + S-adenosyl-L-methionine = a ubiquinol + S-adenosyl-L-homocysteine + H(+). It carries out the reaction a 3-(all-trans-polyprenyl)benzene-1,2-diol + S-adenosyl-L-methionine = a 2-methoxy-6-(all-trans-polyprenyl)phenol + S-adenosyl-L-homocysteine + H(+). The protein operates within cofactor biosynthesis; ubiquinone biosynthesis. O-methyltransferase that catalyzes the 2 O-methylation steps in the ubiquinone biosynthetic pathway. The protein is Ubiquinone biosynthesis O-methyltransferase of Rickettsia bellii (strain OSU 85-389).